Reading from the N-terminus, the 706-residue chain is DNA ligase (706 aa).

Residues 40–44, 89–90, and Glu120 each bind NAD(+); these read DLQYD and SI. Lys122 serves as the catalytic N6-AMP-lysine intermediate. Residues Arg143, Glu190, Lys306, and Lys330 each coordinate NAD(+). Zn(2+) contacts are provided by Cys424, Cys427, Cys442, and Cys447. The region spanning 625-706 is the BRCT domain; the sequence is EANLPLAGKN…FRLRYETEAT (82 aa).

It belongs to the NAD-dependent DNA ligase family. LigA subfamily. It depends on Mg(2+) as a cofactor. Mn(2+) serves as cofactor.

It carries out the reaction NAD(+) + (deoxyribonucleotide)n-3'-hydroxyl + 5'-phospho-(deoxyribonucleotide)m = (deoxyribonucleotide)n+m + AMP + beta-nicotinamide D-nucleotide.. Functionally, DNA ligase that catalyzes the formation of phosphodiester linkages between 5'-phosphoryl and 3'-hydroxyl groups in double-stranded DNA using NAD as a coenzyme and as the energy source for the reaction. It is essential for DNA replication and repair of damaged DNA. This chain is DNA ligase, found in Rhodopirellula baltica (strain DSM 10527 / NCIMB 13988 / SH1).